We begin with the raw amino-acid sequence, 691 residues long: Protein 4.2 (691 aa).

G2 carries the N-myristoyl glycine lipid modification. Residues 31 to 39 (LTLRRGQSF) form a band 3 binding region. The residue at position 248 (S248) is a Phosphoserine. The residue at position 570 (Y570) is a Phosphotyrosine.

It belongs to the transglutaminase superfamily. Transglutaminase family. Component of the ankyrin-1 complex in the erythrocyte, composed of ANK1, RHCE, RHAG, SLC4A1, EPB42, GYPA, GYPB and AQP1. Interacts with SLC4A1 (via the cytoplasmic domain); this interaction is mediated by the SLC4A1 Band 3-I dimer. Interacts with ANK1 (via ANK 1-13 repeats). Interacts with AQP1 (via the C-terminal).

It localises to the cell membrane. It is found in the cytoplasm. The protein localises to the cytoskeleton. Component of the ankyrin-1 complex, a multiprotein complex involved in the stability and shape of the erythrocyte membrane. This chain is Protein 4.2, found in Mus musculus (Mouse).